A 300-amino-acid chain; its full sequence is Acetaldehyde dehydrogenase 3 (300 aa).

Serine 11–isoleucine 14 is a binding site for NAD(+). Cysteine 126 functions as the Acyl-thioester intermediate in the catalytic mechanism. NAD(+) contacts are provided by residues serine 157–asparagine 165 and asparagine 276.

The protein belongs to the acetaldehyde dehydrogenase family.

It catalyses the reaction acetaldehyde + NAD(+) + CoA = acetyl-CoA + NADH + H(+). This chain is Acetaldehyde dehydrogenase 3 (hsaG), found in Rhodococcus jostii (strain RHA1).